The following is a 347-amino-acid chain: Very-long-chain 3-oxoacyl-CoA reductase (347 aa).

Residues 20–40 (LLWVVFGLGVLKCTTLSLRFL) traverse the membrane as a helical segment. Residues D120, N147, Y223, K227, V256, and S258 each coordinate NADP(+). Y223 serves as the catalytic Proton donor. The active-site Lowers pKa of active site Tyr is the K227.

This sequence belongs to the short-chain dehydrogenases/reductases (SDR) family. Interacts with the fatty acid elongation system components ELO3 and TSC13.

The protein resides in the endoplasmic reticulum membrane. It carries out the reaction a very-long-chain (3R)-3-hydroxyacyl-CoA + NADP(+) = a very-long-chain 3-oxoacyl-CoA + NADPH + H(+). The catalysed reaction is 3-oxooctadecanoyl-CoA + NADPH + H(+) = (3R)-hydroxyoctadecanoyl-CoA + NADP(+). The enzyme catalyses 3-oxoeicosanoyl-CoA + NADPH + H(+) = (3R)-hydroxyeicosanoyl-CoA + NADP(+). It catalyses the reaction 3-oxodocosanoyl-CoA + NADPH + H(+) = (3R)-hydroxydocosanoyl-CoA + NADP(+). It carries out the reaction 3-oxotetracosanoyl-CoA + NADPH + H(+) = (3R)-hydroxytetracosanoyl-CoA + NADP(+). The catalysed reaction is 3-oxohexacosanoyl-CoA + NADPH + H(+) = (3R)-hydroxyhexacosanoyl-CoA + NADP(+). Its pathway is lipid metabolism; fatty acid biosynthesis. Component of the microsomal membrane bound fatty acid elongation system, which produces the 26-carbon very long-chain fatty acids (VLCFA) from palmitate. Catalyzes the reduction of the 3-ketoacyl-CoA intermediate that is formed in each cycle of fatty acid elongation. VLCFAs serve as precursors for ceramide and sphingolipids. The polypeptide is Very-long-chain 3-oxoacyl-CoA reductase (IFA38) (Saccharomyces cerevisiae (strain ATCC 204508 / S288c) (Baker's yeast)).